We begin with the raw amino-acid sequence, 441 residues long: MLAIVVSRADEASEHIGRKLRSLADWTEHEDERRADGAGGGTYYRTDRAELRIFDDLHIHLDGAASAFEEPDLLVFASRHSGDTGPLLTAHATGNFGPAEYGGGDGSLARAAPNALSAVRDAFETHAPDDYDVGIECTHHGPSTVGCSSLFVELGSGPDQWQDSEGAAAVARSILSLRGVEPHTERTVVGFGGGHYAPRFDRVLTDTDWGVGHVAADWSLTELGDPRDSRAVIAKAFQASGTEFALVDGDRPELEAVIEDLGFEVLSETFLQETTGVPLSLVGRLEDDCGPIDDGLRLGEPATGYDGEFVTEELPDELLDEANGVDRTAVREAADAVALAYGTADGGSLAVGPVALAAADDYRSLVESLAAVLDTKYDSVEIEASTVIAHREAFDPELARDAGVDEGPAFGKLSSGASVDVDGETVTPDDVHRVRERRFEF.

Belongs to the DtdA deacylase family. In terms of assembly, monomer. It depends on Zn(2+) as a cofactor.

The catalysed reaction is a D-aminoacyl-tRNA + H2O = a tRNA + a D-alpha-amino acid + H(+). The enzyme catalyses glycyl-tRNA(Ala) + H2O = tRNA(Ala) + glycine + H(+). D-aminoacyl-tRNA deacylase with broad substrate specificity. By recycling D-aminoacyl-tRNA to D-amino acids and free tRNA molecules, this enzyme counteracts the toxicity associated with the formation of D-aminoacyl-tRNA entities in vivo. The polypeptide is D-aminoacyl-tRNA deacylase (Natronomonas pharaonis (strain ATCC 35678 / DSM 2160 / CIP 103997 / JCM 8858 / NBRC 14720 / NCIMB 2260 / Gabara) (Halobacterium pharaonis)).